Consider the following 359-residue polypeptide: Homoserine dehydrogenase (359 aa).

NAD(+) contacts are provided by Ala-13, Val-15, Val-16, and Ala-41. NADP(+) is bound at residue Val-16. Residue Val-16 coordinates NADPH. Residues Lys-60, Thr-93, Ser-94, and Lys-117 each contribute to the NADPH site. Thr-93 contributes to the NAD(+) binding site. Thr-93 contributes to the NADP(+) binding site. Lys-117 serves as a coordination point for NADP(+). Na(+)-binding residues include Glu-143, Val-146, Ala-148, and Leu-150. Gly-205 and Glu-208 together coordinate NADP(+). 2 residues coordinate L-homoserine: Glu-208 and Asp-219. The Proton donor role is filled by Lys-223. Residue Lys-290 forms a Glycyl lysine isopeptide (Lys-Gly) (interchain with G-Cter in ubiquitin) linkage. NAD(+) is bound at residue Gly-340. Gly-340 is an NADP(+) binding site. Residue Gly-340 coordinates NADPH.

It belongs to the homoserine dehydrogenase family. Homodimer. The cofactor is a metal cation.

It carries out the reaction L-homoserine + NADP(+) = L-aspartate 4-semialdehyde + NADPH + H(+). The catalysed reaction is L-homoserine + NAD(+) = L-aspartate 4-semialdehyde + NADH + H(+). The protein operates within amino-acid biosynthesis; L-methionine biosynthesis via de novo pathway; L-homoserine from L-aspartate: step 3/3. Its pathway is amino-acid biosynthesis; L-threonine biosynthesis; L-threonine from L-aspartate: step 3/5. Catalyzes the conversion of L-aspartate-beta-semialdehyde (L-Asa) to L-homoserine (L-Hse), the third step in the biosynthesis of amino acids that derive from aspartate (the aspartate family of amino acids), including methioinine and threonine, the latter of which is a precursor to isoleucine; production of homoserine leads to a branch-point in the pathway as it can either be O-phosphorylated for processing to threonine, or O-acylated for processing to methionine. This Saccharomyces cerevisiae (strain ATCC 204508 / S288c) (Baker's yeast) protein is Homoserine dehydrogenase (HOM6).